The sequence spans 316 residues: Phosphatidylinositol mannoside acyltransferase (316 aa).

His137 acts as the Proton acceptor in catalysis. Residues His137 and Arg175 each contribute to the hexadecanoyl-CoA site. Glu211 is an active-site residue. Glu240 is a hexadecanoyl-CoA binding site.

Belongs to the LpxL/LpxM/LpxP family.

The protein resides in the cell inner membrane. The catalysed reaction is a 2,6-O-bis(alpha-D-mannopyranosyl)-1-phosphatidyl-1D-myo-inositol + an acyl-CoA = a 2-O-(alpha-D-mannosyl)-6-O-(6-O-acyl-alpha-D-mannosyl)-1-phosphatidyl-1D-myo-inositol + CoA. It carries out the reaction a 1,2-diacyl-sn-glycero-3-phospho-[alpha-D-mannopyranosyl-(1&lt;-&gt;6)-D-myo-inositol] + an acyl-CoA = a 1,2-diacyl-sn-glycero-3-phospho-[alpha-D-6-acyl-mannopyranosyl-(1&lt;-&gt;6)-D-myo-inositol] + CoA. It participates in phospholipid metabolism; phosphatidylinositol metabolism. Catalyzes the transfer of a palmitoyl moiety from palmitoyl-CoA to the 6-position of the mannose ring linked to the 2-position of myo-inositol in phosphatidyl-myo-inositol monomannoside (PIM1) or dimannoside (PIM2). The protein is Phosphatidylinositol mannoside acyltransferase of Mycobacterium tuberculosis (strain CDC 1551 / Oshkosh).